We begin with the raw amino-acid sequence, 294 residues long: Cytidine deaminase (294 aa).

CMP/dCMP-type deaminase domains are found at residues 48 to 168 and 187 to 294; these read DDNT…FGPN and ETTD…YYTF. Substrate is bound at residue 89–91; it reads NME. Histidine 102 contributes to the Zn(2+) binding site. Residue glutamate 104 is the Proton donor of the active site. The Zn(2+) site is built by cysteine 129 and cysteine 132.

It belongs to the cytidine and deoxycytidylate deaminase family. Homodimer. It depends on Zn(2+) as a cofactor.

The enzyme catalyses cytidine + H2O + H(+) = uridine + NH4(+). It carries out the reaction 2'-deoxycytidine + H2O + H(+) = 2'-deoxyuridine + NH4(+). This enzyme scavenges exogenous and endogenous cytidine and 2'-deoxycytidine for UMP synthesis. This Photorhabdus laumondii subsp. laumondii (strain DSM 15139 / CIP 105565 / TT01) (Photorhabdus luminescens subsp. laumondii) protein is Cytidine deaminase.